Here is a 258-residue protein sequence, read N- to C-terminus: Acyl-[acyl-carrier-protein]--UDP-N-acetylglucosamine O-acyltransferase (258 aa).

The protein belongs to the transferase hexapeptide repeat family. LpxA subfamily. As to quaternary structure, homotrimer.

The protein localises to the cytoplasm. The catalysed reaction is a (3R)-hydroxyacyl-[ACP] + UDP-N-acetyl-alpha-D-glucosamine = a UDP-3-O-[(3R)-3-hydroxyacyl]-N-acetyl-alpha-D-glucosamine + holo-[ACP]. Its pathway is glycolipid biosynthesis; lipid IV(A) biosynthesis; lipid IV(A) from (3R)-3-hydroxytetradecanoyl-[acyl-carrier-protein] and UDP-N-acetyl-alpha-D-glucosamine: step 1/6. In terms of biological role, involved in the biosynthesis of lipid A, a phosphorylated glycolipid that anchors the lipopolysaccharide to the outer membrane of the cell. In Halorhodospira halophila (strain DSM 244 / SL1) (Ectothiorhodospira halophila (strain DSM 244 / SL1)), this protein is Acyl-[acyl-carrier-protein]--UDP-N-acetylglucosamine O-acyltransferase.